We begin with the raw amino-acid sequence, 122 residues long: Large ribosomal subunit protein uL14 (122 aa).

It belongs to the universal ribosomal protein uL14 family. In terms of assembly, part of the 50S ribosomal subunit. Forms a cluster with proteins L3 and L19. In the 70S ribosome, L14 and L19 interact and together make contacts with the 16S rRNA in bridges B5 and B8.

Binds to 23S rRNA. Forms part of two intersubunit bridges in the 70S ribosome. The protein is Large ribosomal subunit protein uL14 of Pseudoalteromonas translucida (strain TAC 125).